Consider the following 343-residue polypeptide: tRNA N6-adenosine threonylcarbamoyltransferase (343 aa).

Fe cation-binding residues include His-120 and His-124. Substrate-binding positions include Val-142–Gly-146, Asp-175, Gly-188, Asp-192, and Asn-281. Asp-310 provides a ligand contact to Fe cation.

The protein belongs to the KAE1 / TsaD family. Fe(2+) serves as cofactor.

The protein localises to the cytoplasm. It carries out the reaction L-threonylcarbamoyladenylate + adenosine(37) in tRNA = N(6)-L-threonylcarbamoyladenosine(37) in tRNA + AMP + H(+). In terms of biological role, required for the formation of a threonylcarbamoyl group on adenosine at position 37 (t(6)A37) in tRNAs that read codons beginning with adenine. Is involved in the transfer of the threonylcarbamoyl moiety of threonylcarbamoyl-AMP (TC-AMP) to the N6 group of A37, together with TsaE and TsaB. TsaD likely plays a direct catalytic role in this reaction. This Bacillus cereus (strain ATCC 14579 / DSM 31 / CCUG 7414 / JCM 2152 / NBRC 15305 / NCIMB 9373 / NCTC 2599 / NRRL B-3711) protein is tRNA N6-adenosine threonylcarbamoyltransferase.